The chain runs to 214 residues: Adenylate kinase (214 aa).

Gly-10–Thr-15 is a binding site for ATP. The NMP stretch occupies residues Ser-30 to Val-59. Residues Thr-31, Arg-36, Gly-57 to Val-59, Gly-85 to Arg-88, and Gln-92 each bind AMP. The LID stretch occupies residues Gly-126 to Asp-163. Residue Arg-127 participates in ATP binding. Zn(2+) contacts are provided by Cys-130, Cys-133, Cys-150, and Cys-153. 2 residues coordinate AMP: Arg-160 and Arg-171. Gly-199 serves as a coordination point for ATP.

Belongs to the adenylate kinase family. In terms of assembly, monomer.

Its subcellular location is the cytoplasm. It carries out the reaction AMP + ATP = 2 ADP. It functions in the pathway purine metabolism; AMP biosynthesis via salvage pathway; AMP from ADP: step 1/1. Functionally, catalyzes the reversible transfer of the terminal phosphate group between ATP and AMP. Plays an important role in cellular energy homeostasis and in adenine nucleotide metabolism. The chain is Adenylate kinase from Trichlorobacter lovleyi (strain ATCC BAA-1151 / DSM 17278 / SZ) (Geobacter lovleyi).